We begin with the raw amino-acid sequence, 422 residues long: Serine--tRNA ligase (422 aa).

231-233 (TGE) contacts L-serine. 262–264 (RQE) lines the ATP pocket. An L-serine-binding site is contributed by E285. 349 to 352 (EISS) serves as a coordination point for ATP. An L-serine-binding site is contributed by S384.

It belongs to the class-II aminoacyl-tRNA synthetase family. Type-1 seryl-tRNA synthetase subfamily. Homodimer. The tRNA molecule binds across the dimer.

The protein resides in the cytoplasm. The catalysed reaction is tRNA(Ser) + L-serine + ATP = L-seryl-tRNA(Ser) + AMP + diphosphate + H(+). It carries out the reaction tRNA(Sec) + L-serine + ATP = L-seryl-tRNA(Sec) + AMP + diphosphate + H(+). The protein operates within aminoacyl-tRNA biosynthesis; selenocysteinyl-tRNA(Sec) biosynthesis; L-seryl-tRNA(Sec) from L-serine and tRNA(Sec): step 1/1. Its function is as follows. Catalyzes the attachment of serine to tRNA(Ser). Is also able to aminoacylate tRNA(Sec) with serine, to form the misacylated tRNA L-seryl-tRNA(Sec), which will be further converted into selenocysteinyl-tRNA(Sec). The protein is Serine--tRNA ligase of Mesoplasma florum (strain ATCC 33453 / NBRC 100688 / NCTC 11704 / L1) (Acholeplasma florum).